A 135-amino-acid polypeptide reads, in one-letter code: Transcriptional activator protein (135 aa).

The short motif at 17 to 32 (KIQHHIAKKRQVRRRR) is the Nuclear localization signal element. Residues 37–54 (CGCSYYIHLDCINHGFTH) fold into a zinc finger. Positions 120-135 (HLDDLTVSDWSFFKSL) are transactivation.

It belongs to the geminiviridae transcriptional activator protein family. Monomer. Homodimer. Homooligomer. Self-interaction correlates with nuclear localization and efficient activation of transcription. Monomers suppress local silencing by interacting with and inactivating host adenosine kinase 2 (ADK2) in the cytoplasm. Interacts with and inhibits host SNF1 kinase. Binds to ssDNA. Phosphorylated.

The protein localises to the host nucleus. It is found in the host cytoplasm. Functionally, strong activator of the late viral genes promoters. Acts as a suppressor of RNA-mediated gene silencing, also known as post-transcriptional gene silencing (PTGS), a mechanism of plant viral defense that limits the accumulation of viral RNAs. TrAP suppresses the host RNA silencing by inhibiting adenosine kinase 2 (ADK2), a kinase involved in a general methylation pathway. Also suppresses the host basal defense by interacting with and inhibiting SNF1 kinase, a key regulator of cell metabolism implicated in innate antiviral defense. Determines pathogenicity. In Tomato yellow leaf curl Sardinia virus (isolate Spain-2) (TYLCSV), this protein is Transcriptional activator protein.